Consider the following 630-residue polypeptide: ATP-dependent zinc metalloprotease FtsH 2 (630 aa).

Residues 1–8 lie on the Cytoplasmic side of the membrane; that stretch reads MNNNPNRR. Residues 9-29 form a helical membrane-spanning segment; the sequence is GSLIGPLFIYFILAMLIFMSI. Topologically, residues 30–110 are periplasmic; it reads SQLNTSNITE…YIQNTGASWW (81 aa). Residues 111–131 traverse the membrane as a helical segment; the sequence is VTMLIYMLPLIILMFFWFWMF. The Cytoplasmic portion of the chain corresponds to 132–630; it reads RRSGTGEGIP…KETNLFVSYA (499 aa). 203-210 is a binding site for ATP; the sequence is GPPGTGKT. H425 is a Zn(2+) binding site. E426 is a catalytic residue. Positions 429 and 502 each coordinate Zn(2+).

It in the central section; belongs to the AAA ATPase family. In the C-terminal section; belongs to the peptidase M41 family. As to quaternary structure, homohexamer. Requires Zn(2+) as cofactor.

It localises to the cell inner membrane. Acts as a processive, ATP-dependent zinc metallopeptidase for both cytoplasmic and membrane proteins. Plays a role in the quality control of integral membrane proteins. The polypeptide is ATP-dependent zinc metalloprotease FtsH 2 (Petrotoga mobilis (strain DSM 10674 / SJ95)).